The following is a 146-amino-acid chain: Cell division protein SepF (146 aa).

It belongs to the SepF family. Homodimer. Interacts with FtsZ.

It localises to the cytoplasm. Cell division protein that is part of the divisome complex and is recruited early to the Z-ring. Probably stimulates Z-ring formation, perhaps through the cross-linking of FtsZ protofilaments. Its function overlaps with FtsA. The sequence is that of Cell division protein SepF from Alkaliphilus oremlandii (strain OhILAs) (Clostridium oremlandii (strain OhILAs)).